Reading from the N-terminus, the 768-residue chain is Tripartite motif-containing protein 67 (768 aa).

The RING-type; degenerate zinc finger occupies 7 to 42 (CPVCGSLFREPIILPCSHNVCLPCARTIAVQTPDGE). Residues 55–70 (AAAAATPPDQDAAAGA) are compositionally biased toward low complexity. Disordered regions lie at residues 55–74 (AAAAATPPDQDAAAGATSGG) and 247–284 (QPPPPPTPPEATPAVTGTSTASSAGGCRSPGGAGASAP). The B box-type 1; degenerate zinc-finger motif lies at 201 to 248 (AICQLCDRTPPEPAATLCEQCDVLYCATCQLKCHPSRGPFAKHRLVQP). Residues 247 to 257 (QPPPPPTPPEA) are compositionally biased toward pro residues. The B box-type 2 zinc finger occupies 285–327 (RKFPTCPEHEMENYSMYCVSCRSPVCYMCLEEGRHSKHEVKPL). Zn(2+)-binding residues include Cys-290, His-293, Cys-313, and His-319. Residues 332–369 (KQHKAQLSQALNGVSDKAKEAKEFLVQLKNILQQIQEN) are a coiled coil. The COS domain occupies 435 to 493 (IKEDDPSGFLQISDALIKRVQTSQEQWVKGALEPKVSAEFDLTLDSEPLLQAIHQLDFV). The Fibronectin type-III domain occupies 498-592 (PPVPLLQLEK…KTVVLQTSDV (95 aa)). One can recognise a B30.2/SPRY domain in the interval 574–765 (NSSGVGPYSK…VPTNLGRPKL (192 aa)).

The protein resides in the cytoplasm. The protein localises to the cytoskeleton. The chain is Tripartite motif-containing protein 67 (Trim67) from Mus musculus (Mouse).